The primary structure comprises 212 residues: 3-isopropylmalate dehydratase small subunit 2 (212 aa).

It belongs to the LeuD family. LeuD type 1 subfamily. In terms of assembly, heterodimer of LeuC and LeuD.

The enzyme catalyses (2R,3S)-3-isopropylmalate = (2S)-2-isopropylmalate. Its pathway is amino-acid biosynthesis; L-leucine biosynthesis; L-leucine from 3-methyl-2-oxobutanoate: step 2/4. Its function is as follows. Catalyzes the isomerization between 2-isopropylmalate and 3-isopropylmalate, via the formation of 2-isopropylmaleate. The sequence is that of 3-isopropylmalate dehydratase small subunit 2 from Chromobacterium violaceum (strain ATCC 12472 / DSM 30191 / JCM 1249 / CCUG 213 / NBRC 12614 / NCIMB 9131 / NCTC 9757 / MK).